Reading from the N-terminus, the 230-residue chain is ATP synthase subunit a (230 aa).

Helical transmembrane passes span 17 to 37 (LPIT…FIMA), 78 to 98 (IFPF…IGVI), 107 to 127 (DLSV…WFGI), 165 to 187 (LFGN…GFLV), and 198 to 218 (EAII…AGGI).

Belongs to the ATPase A chain family. F-type ATPases have 2 components, CF(1) - the catalytic core - and CF(0) - the membrane proton channel. CF(1) has five subunits: alpha(3), beta(3), gamma(1), delta(1), epsilon(1). CF(0) has three main subunits: a(1), b(2) and c(9-12). The alpha and beta chains form an alternating ring which encloses part of the gamma chain. CF(1) is attached to CF(0) by a central stalk formed by the gamma and epsilon chains, while a peripheral stalk is formed by the delta and b chains.

Its subcellular location is the cell inner membrane. In terms of biological role, key component of the proton channel; it plays a direct role in the translocation of protons across the membrane. The protein is ATP synthase subunit a of Legionella pneumophila (strain Paris).